We begin with the raw amino-acid sequence, 500 residues long: uncharacterized protein (500 aa).

The helical transmembrane segment at 27 to 47 threads the bilayer; that stretch reads IFALILIVFGFIIAPLLPGIF.

It localises to the membrane. This is an uncharacterized protein from Borreliella burgdorferi (strain ATCC 35210 / DSM 4680 / CIP 102532 / B31) (Borrelia burgdorferi).